We begin with the raw amino-acid sequence, 218 residues long: Recombination protein RecR (218 aa).

The segment at 56–71 (CRICCNISRDEVCRIC) adopts a C4-type zinc-finger fold. Positions 79-195 (GLICVVEEPK…VVSRLASGMP (117 aa)) constitute a Toprim domain.

Belongs to the RecR family.

Functionally, may play a role in DNA repair. It seems to be involved in an RecBC-independent recombinational process of DNA repair. It may act with RecF and RecO. This chain is Recombination protein RecR, found in Corynebacterium efficiens (strain DSM 44549 / YS-314 / AJ 12310 / JCM 11189 / NBRC 100395).